Reading from the N-terminus, the 158-residue chain is Regulator of sigma D (158 aa).

The protein belongs to the Rsd/AlgQ family. As to quaternary structure, interacts with RpoD.

Its subcellular location is the cytoplasm. In terms of biological role, binds RpoD and negatively regulates RpoD-mediated transcription activation by preventing the interaction between the primary sigma factor RpoD with the catalytic core of the RNA polymerase and with promoter DNA. May be involved in replacement of the RNA polymerase sigma subunit from RpoD to RpoS during the transition from exponential growth to the stationary phase. This is Regulator of sigma D from Escherichia coli O6:H1 (strain CFT073 / ATCC 700928 / UPEC).